Here is a 153-residue protein sequence, read N- to C-terminus: Small heat shock protein ibp (153 aa).

The 119-residue stretch at 35–153 (KIISDSVPPY…KIQKIQINVK (119 aa)) folds into the sHSP domain.

Belongs to the small heat shock protein (HSP20) family.

The polypeptide is Small heat shock protein ibp (ibp) (Buchnera aphidicola subsp. Thelaxes suberi).